Reading from the N-terminus, the 213-residue chain is Serine protease inhibitor 5 (213 aa).

An N-terminal signal peptide occupies residues 1-22 (MKCLFLLCLCLVPIVVFSSTFT). Positions 23 to 28 (SQNPIN) are excised as a propeptide. The Vacuolar targeting signal motif lies at 25 to 30 (NPINLP). Intrachain disulfides connect Cys76-Cys125 and Cys174-Cys183.

This sequence belongs to the protease inhibitor I3 (leguminous Kunitz-type inhibitor) family.

Its subcellular location is the vacuole. Its function is as follows. Inhibitor of trypsin (serine protease). Protects the plant by inhibiting proteases of invading organisms. The chain is Serine protease inhibitor 5 from Solanum tuberosum (Potato).